The primary structure comprises 179 residues: Sec-independent protein translocase protein TatB (179 aa).

Residues 1-21 traverse the membrane as a helical segment; the sequence is MFDLGFWEVLIIMLIGLLILG. Composition is skewed to basic and acidic residues over residues 75-86 and 94-106; these read KDVEKNARRFEA and TFRD…DDAA. A disordered region spans residues 75–179; the sequence is KDVEKNARRF…QGGGGEEKRQ (105 aa).

The protein belongs to the TatB family. In terms of assembly, the Tat system comprises two distinct complexes: a TatABC complex, containing multiple copies of TatA, TatB and TatC subunits, and a separate TatA complex, containing only TatA subunits. Substrates initially bind to the TatABC complex, which probably triggers association of the separate TatA complex to form the active translocon.

It localises to the cell inner membrane. Part of the twin-arginine translocation (Tat) system that transports large folded proteins containing a characteristic twin-arginine motif in their signal peptide across membranes. Together with TatC, TatB is part of a receptor directly interacting with Tat signal peptides. TatB may form an oligomeric binding site that transiently accommodates folded Tat precursor proteins before their translocation. The protein is Sec-independent protein translocase protein TatB of Alkalilimnicola ehrlichii (strain ATCC BAA-1101 / DSM 17681 / MLHE-1).